Consider the following 724-residue polypeptide: Catalase-peroxidase (724 aa).

The tryptophyl-tyrosyl-methioninium (Trp-Tyr) (with M-252) cross-link spans 98 to 226 (WHSAGSYRIA…LAAVMMGLIY (129 aa)). The active-site Proton acceptor is H99. Residues 226–252 (YVNPEGVDGHPDPQKTANDVRVTFARM) constitute a cross-link (tryptophyl-tyrosyl-methioninium (Tyr-Met) (with W-98)). H267 lines the heme b pocket.

It belongs to the peroxidase family. Peroxidase/catalase subfamily. As to quaternary structure, homodimer or homotetramer. Heme b serves as cofactor. In terms of processing, formation of the three residue Trp-Tyr-Met cross-link is important for the catalase, but not the peroxidase activity of the enzyme.

The catalysed reaction is H2O2 + AH2 = A + 2 H2O. It catalyses the reaction 2 H2O2 = O2 + 2 H2O. In terms of biological role, bifunctional enzyme with both catalase and broad-spectrum peroxidase activity. The chain is Catalase-peroxidase from Edwardsiella tarda.